The following is a 245-amino-acid chain: MSQSTSVLRRNGFTFKQFFVAHDRCAMKAGTDGILLGAWAPVAGVKRCLDIGAGSGLLALMLAQRTSDSVIIDAVELESEAATQAQENVAQSPWLERINVHTADIQQWVTQQTARFDLIISNPPYYEQGVECATPQREQARYTTSLDHQTLLTCAAECITEEGFFCVVLPEQIGNSFTELALSMGWHLRLRTDVAENEARLPHRVLLAFSPQAGECFSDRLVIRGPDQNYSEAYTALTQAFYLFM.

This sequence belongs to the methyltransferase superfamily. tRNA (adenine-N(6)-)-methyltransferase family.

The protein resides in the cytoplasm. The catalysed reaction is adenosine(37) in tRNA1(Val) + S-adenosyl-L-methionine = N(6)-methyladenosine(37) in tRNA1(Val) + S-adenosyl-L-homocysteine + H(+). Specifically methylates the adenine in position 37 of tRNA(1)(Val) (anticodon cmo5UAC). The sequence is that of tRNA1(Val) (adenine(37)-N6)-methyltransferase from Escherichia coli O157:H7 (strain EC4115 / EHEC).